The sequence spans 948 residues: Probable DNA-directed RNA polymerase (948 aa).

Residues Asp600, Lys680, and Asp853 contribute to the active site.

This sequence belongs to the phage and mitochondrial RNA polymerase family.

Its subcellular location is the mitochondrion. It carries out the reaction RNA(n) + a ribonucleoside 5'-triphosphate = RNA(n+1) + diphosphate. Its function is as follows. DNA-dependent RNA polymerase catalyzes the transcription of DNA into RNA using the four ribonucleoside triphosphates as substrates. In Podospora anserina (Pleurage anserina), this protein is Probable DNA-directed RNA polymerase.